The following is a 237-amino-acid chain: Protein FEV (237 aa).

Residues 47 to 127 (IQLWQFLLEL…HGKRYAYRFD (81 aa)) constitute a DNA-binding region (ETS). The interval 129–237 (QGLAQACQPP…AASHLGGHYH (109 aa)) is may mediate active transcriptional repression.

Belongs to the ETS family. As to expression, expressed in central serotonergic neurons.

The protein localises to the nucleus. Functionally, functions as a transcriptional regulator. May function as a transcriptional repressor. Functions in the differentiation and the maintenance of the central serotonergic neurons. May play a role in cell growth. This chain is Protein FEV (Fev), found in Mus musculus (Mouse).